Reading from the N-terminus, the 448-residue chain is Probable malate:quinone oxidoreductase (448 aa).

Belongs to the MQO family. FAD is required as a cofactor.

It carries out the reaction (S)-malate + a quinone = a quinol + oxaloacetate. The protein operates within carbohydrate metabolism; tricarboxylic acid cycle; oxaloacetate from (S)-malate (quinone route): step 1/1. Catalyzes oxidation of malate to oxaloacetate in the citric acid cycle. Donates electrons to quinones of the electron transfer chain. The protein is Probable malate:quinone oxidoreductase (mqo) of Campylobacter jejuni subsp. jejuni serotype O:2 (strain ATCC 700819 / NCTC 11168).